The sequence spans 120 residues: Glycine cleavage system H protein (120 aa).

Positions 17 to 99 (IATVGITAHA…RGAGWFFKLK (83 aa)) constitute a Lipoyl-binding domain. Lys58 bears the N6-lipoyllysine mark.

It belongs to the GcvH family. As to quaternary structure, the glycine cleavage system is composed of four proteins: P, T, L and H. It depends on (R)-lipoate as a cofactor.

Its function is as follows. The glycine cleavage system catalyzes the degradation of glycine. The H protein shuttles the methylamine group of glycine from the P protein to the T protein. This is Glycine cleavage system H protein from Allorhizobium ampelinum (strain ATCC BAA-846 / DSM 112012 / S4) (Agrobacterium vitis (strain S4)).